Here is a 141-residue protein sequence, read N- to C-terminus: Putative pre-16S rRNA nuclease (141 aa).

This sequence belongs to the YqgF nuclease family.

The protein localises to the cytoplasm. Could be a nuclease involved in processing of the 5'-end of pre-16S rRNA. The chain is Putative pre-16S rRNA nuclease from Histophilus somni (strain 129Pt) (Haemophilus somnus).